We begin with the raw amino-acid sequence, 311 residues long: Pyrimidine-specific ribonucleoside hydrolase RihA (311 aa).

Residue His240 is part of the active site.

Belongs to the IUNH family. RihA subfamily.

Its function is as follows. Hydrolyzes with equal efficiency cytidine or uridine to ribose and cytosine or uracil, respectively. In Escherichia coli O157:H7, this protein is Pyrimidine-specific ribonucleoside hydrolase RihA.